Here is a 155-residue protein sequence, read N- to C-terminus: 3-hydroxyacyl-[acyl-carrier-protein] dehydratase FabZ (155 aa).

His-57 is a catalytic residue.

This sequence belongs to the thioester dehydratase family. FabZ subfamily.

The protein resides in the cytoplasm. The catalysed reaction is a (3R)-hydroxyacyl-[ACP] = a (2E)-enoyl-[ACP] + H2O. Functionally, involved in unsaturated fatty acids biosynthesis. Catalyzes the dehydration of short chain beta-hydroxyacyl-ACPs and long chain saturated and unsaturated beta-hydroxyacyl-ACPs. The sequence is that of 3-hydroxyacyl-[acyl-carrier-protein] dehydratase FabZ from Cereibacter sphaeroides (strain KD131 / KCTC 12085) (Rhodobacter sphaeroides).